The primary structure comprises 2883 residues: Bifunctional DNA-directed RNA polymerase subunit beta-beta' (2883 aa).

Residues 1–1377 form a DNA-directed RNA polymerase subunit beta region; it reads MPTTLKSGNR…DVTVYGETEE (1377 aa). The segment at 1382 to 2883 is DNA-directed RNA polymerase subunit beta'; the sequence is PMPIKEDDRP…IRIKEKTEGA (1502 aa). Zn(2+) contacts are provided by Cys-1447, Cys-1449, Cys-1462, and Cys-1465. Asp-1846, Asp-1848, and Asp-1850 together coordinate Mg(2+). Cys-2176, Cys-2250, Cys-2257, and Cys-2260 together coordinate Zn(2+).

This sequence in the N-terminal section; belongs to the RNA polymerase beta chain family. It in the C-terminal section; belongs to the RNA polymerase beta' chain family. The RNAP catalytic core consists of 2 alpha, 1 beta/beta' and 1 omega subunit. When a sigma factor is associated with the core the holoenzyme is formed, which can initiate transcription. Mg(2+) serves as cofactor. It depends on Zn(2+) as a cofactor.

The enzyme catalyses RNA(n) + a ribonucleoside 5'-triphosphate = RNA(n+1) + diphosphate. Functionally, DNA-dependent RNA polymerase catalyzes the transcription of DNA into RNA using the four ribonucleoside triphosphates as substrates. In Wolinella succinogenes (strain ATCC 29543 / DSM 1740 / CCUG 13145 / JCM 31913 / LMG 7466 / NCTC 11488 / FDC 602W) (Vibrio succinogenes), this protein is Bifunctional DNA-directed RNA polymerase subunit beta-beta' (rpoBC).